Reading from the N-terminus, the 31-residue chain is Protamine-YI (31 aa).

The interval 1-31 (ARRRRSSSRPIRRRRPRRRTTRRRRAGRRRR) is disordered.

In terms of tissue distribution, testis.

The protein resides in the nucleus. Its subcellular location is the chromosome. Protamines substitute for histones in the chromatin of sperm during the haploid phase of spermatogenesis. They compact sperm DNA into a highly condensed, stable and inactive complex. This Clupea harengus (Atlantic herring) protein is Protamine-YI.